A 271-amino-acid polypeptide reads, in one-letter code: Magnesium dechelatase SGR2, chloroplastic (271 aa).

The transit peptide at Met1–Glu54 directs the protein to the chloroplast.

Belongs to the staygreen family. In terms of assembly, interacts with the light harvesting complex II (LHCII). Interacts with the chlorophyll catabolic enzyme (CCE) RCCR.

It localises to the plastid. It is found in the chloroplast thylakoid membrane. It carries out the reaction chlorophyll a + 2 H(+) = pheophytin a + Mg(2+). Functionally, magnesium chelatase involved in chlorophyll a degradation in the chlorophyll-protein complexes of photosystem I (PSI) and photosystem II (PSII). Contributes to the degradation of PSI and PSII in the thylakoid membranes. Required to trigger chlorophyll degradation during natural and dark-induced leaf senescence. Mediates chlorophyll degradation during embryo degreening. Recombinant SGR2 possesses high dechelating activity against chlorophyll a, very low activity against chlorophyllide a, and no activity against chlorophyll b. In Arabidopsis thaliana (Mouse-ear cress), this protein is Magnesium dechelatase SGR2, chloroplastic.